Reading from the N-terminus, the 139-residue chain is Probable transcription termination protein NusA (139 aa).

The KH domain occupies D31 to T97.

This sequence belongs to the NusA family.

The protein resides in the cytoplasm. Participates in transcription termination. The polypeptide is Probable transcription termination protein NusA (Halobacterium salinarum (strain ATCC 29341 / DSM 671 / R1)).